The following is a 251-amino-acid chain: Aquaporin (251 aa).

At 1-11 the chain is on the cytoplasmic side; sequence MAKEALKTLQS. Residues 12-32 form a helical membrane-spanning segment; that stretch reads MFGEMVASFVFGFAVYSAILG. Over 33-42 the chain is Extracellular; it reads SSISQSSADK. The chain crosses the membrane as a helical span at residues 43 to 63; sequence VIVGLTVGFSGIGVIYSFCDV. The Cytoplasmic segment spans residues 64-86; the sequence is TIAHFNPAITLAAILTSKIDVLQ. An NPA motif is present at residues 69–71; that stretch reads NPA. A helical transmembrane segment spans residues 87–107; the sequence is GLGYMLAQYIGFMLAVCALLV. Topologically, residues 108-133 are extracellular; that stretch reads CSPVEYKETLDTIRPGPTDFGATSLN. A helical membrane pass occupies residues 134–154; sequence VFFAEFFLTAIFVHIVFATAV. At 155-179 the chain is on the cytoplasmic side; it reads NPYKPKVDTEGKFVDPDEKEPVDRR. Residues 180–200 traverse the membrane as a helical segment; sequence ITAPLCIGLTLGFLAFMGLAS. The Extracellular portion of the chain corresponds to 201-224; sequence SGGAFNPGLTFAPMAMSNTWSHFW. The NPG signature appears at 206-208; that stretch reads NPG. A helical membrane pass occupies residues 225–245; sequence IYLGGQYLGGLTGGLLQVLVL. Residues 246–251 lie on the Cytoplasmic side of the membrane; that stretch reads YKLSSD.

This sequence belongs to the MIP/aquaporin (TC 1.A.8) family.

The protein resides in the cell membrane. Water channel required to facilitate the transport of water across membranes. Involved in osmotolerance. The sequence is that of Aquaporin (AQP) from Encephalitozoon intestinalis (Microsporidian parasite).